Here is a 1132-residue protein sequence, read N- to C-terminus: Ubiquitin carboxyl-terminal hydrolase 43 (1132 aa).

The tract at residues 1–103 is disordered; it reads MDPGVGNALG…GARPPGAQGL (103 aa). Basic residues predominate over residues 17–28; that stretch reads RPRRRRSLRRLL. 2 stretches are compositionally biased toward low complexity: residues 29–44 and 63–78; these read NRFL…SGDS and FACA…GSPG. Residues 101 to 710 form the USP domain; sequence QGLKNHGNTC…GAYILFYQKR (610 aa). The Nucleophile role is filled by C110. The active-site Proton acceptor is the H668. Residue R746 is modified to Asymmetric dimethylarginine. 4 disordered regions span residues 839-891, 935-1008, 1024-1044, and 1057-1106; these read RRRP…TGVP, TVMP…RGQG, RTVR…SDRL, and RESP…GEQI. The segment covering 941–950 has biased composition (basic and acidic residues); it reads GDEKPARPEG. Low complexity predominate over residues 958 to 967; it reads GSSQVGSQSS. S970 is modified (phosphoserine). Over residues 994 to 1006 the composition is skewed to basic and acidic residues; it reads AAMEERAPDKDRG.

The protein belongs to the peptidase C19 family.

It carries out the reaction Thiol-dependent hydrolysis of ester, thioester, amide, peptide and isopeptide bonds formed by the C-terminal Gly of ubiquitin (a 76-residue protein attached to proteins as an intracellular targeting signal).. Functionally, may recognize and hydrolyze the peptide bond at the C-terminal Gly of ubiquitin. Involved in the processing of poly-ubiquitin precursors as well as that of ubiquitinated proteins. The polypeptide is Ubiquitin carboxyl-terminal hydrolase 43 (Usp43) (Mus musculus (Mouse)).